A 194-amino-acid polypeptide reads, in one-letter code: Inner membrane-spanning protein YciB (194 aa).

5 helical membrane-spanning segments follow: residues Leu3–Tyr23, Ile47–Tyr67, Trp76–Phe96, Leu119–Phe139, and Phe149–Leu169.

This sequence belongs to the YciB family.

Its subcellular location is the cell inner membrane. Its function is as follows. Plays a role in cell envelope biogenesis, maintenance of cell envelope integrity and membrane homeostasis. This Colwellia psychrerythraea (strain 34H / ATCC BAA-681) (Vibrio psychroerythus) protein is Inner membrane-spanning protein YciB.